The primary structure comprises 454 residues: Phosphoglucosamine mutase (454 aa).

The active-site Phosphoserine intermediate is the Ser101. 4 residues coordinate Mg(2+): Ser101, Asp243, Asp245, and Asp247. Ser101 is subject to Phosphoserine.

This sequence belongs to the phosphohexose mutase family. Requires Mg(2+) as cofactor. Activated by phosphorylation.

The catalysed reaction is alpha-D-glucosamine 1-phosphate = D-glucosamine 6-phosphate. Its function is as follows. Catalyzes the conversion of glucosamine-6-phosphate to glucosamine-1-phosphate. The protein is Phosphoglucosamine mutase of Citrifermentans bemidjiense (strain ATCC BAA-1014 / DSM 16622 / JCM 12645 / Bem) (Geobacter bemidjiensis).